The sequence spans 116 residues: NADH-ubiquinone oxidoreductase chain 3 (116 aa).

A run of 3 helical transmembrane segments spans residues 8-28 (VAAT…LPSL), 56-76 (FFLV…LLPL), and 87-107 (ISLL…IYEW).

This sequence belongs to the complex I subunit 3 family.

It localises to the mitochondrion membrane. It catalyses the reaction a ubiquinone + NADH + 5 H(+)(in) = a ubiquinol + NAD(+) + 4 H(+)(out). Core subunit of the mitochondrial membrane respiratory chain NADH dehydrogenase (Complex I) that is believed to belong to the minimal assembly required for catalysis. Complex I functions in the transfer of electrons from NADH to the respiratory chain. The immediate electron acceptor for the enzyme is believed to be ubiquinone. The sequence is that of NADH-ubiquinone oxidoreductase chain 3 (MT-ND3) from Squalus acanthias (Spiny dogfish).